We begin with the raw amino-acid sequence, 117 residues long: MNLIDQIENEQLRSDLPLFVSGDTIIVQVKVREGERERLQAFEGVVIAKKNRGIGSAFTVRKISHGEGVERVFQTHSKMIDSIKVKRRGKVHQAKLYYLRGLTGKKARIKEKLQIRK.

Belongs to the bacterial ribosomal protein bL19 family.

This protein is located at the 30S-50S ribosomal subunit interface and may play a role in the structure and function of the aminoacyl-tRNA binding site. This chain is Large ribosomal subunit protein bL19, found in Vesicomyosocius okutanii subsp. Calyptogena okutanii (strain HA).